The sequence spans 397 residues: Fractalkine (397 aa).

Residues methionine 1 to glycine 24 form the signal peptide. The interval glutamine 25–glycine 100 is chemokine and involved in interaction with ITGAV:ITGB3 and ITGA4:ITGB1. Topologically, residues glutamine 25–glutamine 341 are extracellular. 2 disulfides stabilise this stretch: cysteine 32–cysteine 58 and cysteine 36–cysteine 74. The N-linked (GlcNAc...) asparagine glycan is linked to asparagine 33. Residues glycine 101–glutamine 341 are mucin-like stalk. Disordered regions lie at residues glutamate 128–methionine 265 and valine 289–proline 309. Residues glycine 133–alanine 147 are compositionally biased toward polar residues. A glycan (O-linked (GalNAc...) threonine) is linked at threonine 183. The segment covering threonine 193 to proline 202 has biased composition (polar residues). Over residues proline 219–glutamate 243 the composition is skewed to low complexity. O-linked (GalNAc...) serine glycosylation occurs at serine 253. An O-linked (GalNAc...) threonine glycan is attached at threonine 329. A helical membrane pass occupies residues alanine 342–tyrosine 362. Residues glutamine 363–valine 397 are Cytoplasmic-facing.

It belongs to the intercrine delta family. In terms of assembly, monomer. Forms a ternary complex with CX3CR1 and ITGAV:ITGB3 or ITGA4:ITGB1. (Microbial infection) Interacts with pox virus crmD; this inhibits cell migration mediated by CX3CL1. As to quaternary structure, (Microbial infection) Interacts (via N-terminus) with human cytomegalovirus (HHV-5) US28. In terms of assembly, (Microbial infection) Interacts with P.falciparum (strain 3D7) CBP1 and CBP2 (via their extracellular domains); the interaction mediates the adhesion of infected erythrocytes with endothelial cells. In terms of processing, a soluble short 95 kDa form may be released by proteolytic cleavage from the long membrane-anchored form. Post-translationally, O-glycosylated with core 1 or possibly core 8 glycans. As to expression, expressed in the seminal plasma, endometrial fluid and follicular fluid (at protein level). Small intestine, colon, testis, prostate, heart, brain, lung, skeletal muscle, kidney and pancreas. Most abundant in the brain and heart.

The protein localises to the cell membrane. It localises to the secreted. Functionally, chemokine that acts as a ligand for both CX3CR1 and integrins ITGAV:ITGB3 and ITGA4:ITGB1. The CX3CR1-CX3CL1 signaling exerts distinct functions in different tissue compartments, such as immune response, inflammation, cell adhesion and chemotaxis. Regulates leukocyte adhesion and migration processes at the endothelium. Can activate integrins in both a CX3CR1-dependent and CX3CR1-independent manner. In the presence of CX3CR1, activates integrins by binding to the classical ligand-binding site (site 1) in integrins. In the absence of CX3CR1, binds to a second site (site 2) in integrins which is distinct from site 1 and enhances the binding of other integrin ligands to site 1. In terms of biological role, the soluble form is chemotactic for T-cells and monocytes, but not for neutrophils. The membrane-bound form promotes adhesion of those leukocytes to endothelial cells. Its function is as follows. (Microbial infection) Mediates the cytoadherence of erythrocytes infected with parasite P.falciparum (strain 3D7) with endothelial cells by interacting with P.falciparum CBP1 and CBP2 expressed at the surface of erythrocytes. The adhesion prevents the elimination of infected erythrocytes by the spleen. This is Fractalkine from Homo sapiens (Human).